Here is a 462-residue protein sequence, read N- to C-terminus: MSHSGLTRTAAAPPSLSRHAVDTARLAAPLAIAQLSQMAMSVTDTVLLGSLGPDSLAAGGLGANFFFVIVTVLQGVLSSVSVSVAHARGAQAEHRVPHIYWTGFVLSVLLAIPAVVALSLSEPLLLMFHEPPTLAQHVGEYTGILRFAALGSLIGVGLMRAFLPAIGAARRLLWVSIGGIGVNAVLNYGLIHGAYGLPRLGFLGSAVATTITIWLTAFALIWLLHGRARFRHFVSAARPKLPMMGELIGIGWPVAITYGVESTLFLATGLTVGVLGATALAAHQIALNVASVAFMVPLAIGQAANVRVGYWIGAGDPVAARHAGFVALGLGVAFMSLSGLVLILAPHAIVGLYLHLDDPANAATVSLAASLLGIAAVFQIVDGMQTVGSGALRGLRDTRIPMLAATFGYWGIGFPTGYWLAFHAGLGARGLWWGLAAGLASVAVLMAWRFHLKTSSLIAAPR.

A run of 11 helical transmembrane segments spans residues 56–76, 99–119, 147–167, 172–192, 202–222, 247–267, 280–300, 325–345, 361–381, 402–422, and 430–450; these read LAAGGLGANFFFVIVTVLQGV, IYWTGFVLSVLLAIPAVVALS, FAALGSLIGVGLMRAFLPAIG, LLWVSIGGIGVNAVLNYGLIH, FLGSAVATTITIWLTAFALIW, LIGIGWPVAITYGVESTLFLA, LAAHQIALNVASVAFMVPLAI, FVALGLGVAFMSLSGLVLILA, NAATVSLAASLLGIAAVFQIV, MLAATFGYWGIGFPTGYWLAF, and GLWWGLAAGLASVAVLMAWRF.

This sequence belongs to the multi antimicrobial extrusion (MATE) (TC 2.A.66.1) family.

It localises to the cell inner membrane. Functionally, multidrug efflux pump. Confers probably resistance to the cationic peptide polymyxin B (PMB). This Burkholderia vietnamiensis protein is Multidrug resistance protein NorM (norM).